The chain runs to 264 residues: 3-methyl-2-oxobutanoate hydroxymethyltransferase (264 aa).

2 residues coordinate Mg(2+): Asp-45 and Asp-84. 3-methyl-2-oxobutanoate contacts are provided by residues 45–46, Asp-84, and Lys-112; that span reads DS. Glu-114 is a Mg(2+) binding site. Glu-181 (proton acceptor) is an active-site residue.

The protein belongs to the PanB family. As to quaternary structure, homodecamer; pentamer of dimers. Requires Mg(2+) as cofactor.

It is found in the cytoplasm. The enzyme catalyses 3-methyl-2-oxobutanoate + (6R)-5,10-methylene-5,6,7,8-tetrahydrofolate + H2O = 2-dehydropantoate + (6S)-5,6,7,8-tetrahydrofolate. It functions in the pathway cofactor biosynthesis; (R)-pantothenate biosynthesis; (R)-pantoate from 3-methyl-2-oxobutanoate: step 1/2. In terms of biological role, catalyzes the reversible reaction in which hydroxymethyl group from 5,10-methylenetetrahydrofolate is transferred onto alpha-ketoisovalerate to form ketopantoate. The sequence is that of 3-methyl-2-oxobutanoate hydroxymethyltransferase from Alteromonas mediterranea (strain DSM 17117 / CIP 110805 / LMG 28347 / Deep ecotype).